We begin with the raw amino-acid sequence, 164 residues long: 6,7-dimethyl-8-ribityllumazine synthase (164 aa).

5-amino-6-(D-ribitylamino)uracil contacts are provided by residues Phe24, 58-60 (ALE), and 82-84 (AVI). 87–88 (ET) provides a ligand contact to (2S)-2-hydroxy-3-oxobutyl phosphate. His90 serves as the catalytic Proton donor. A 5-amino-6-(D-ribitylamino)uracil-binding site is contributed by Asn115. Arg129 contributes to the (2S)-2-hydroxy-3-oxobutyl phosphate binding site.

It belongs to the DMRL synthase family.

The catalysed reaction is (2S)-2-hydroxy-3-oxobutyl phosphate + 5-amino-6-(D-ribitylamino)uracil = 6,7-dimethyl-8-(1-D-ribityl)lumazine + phosphate + 2 H2O + H(+). Its pathway is cofactor biosynthesis; riboflavin biosynthesis; riboflavin from 2-hydroxy-3-oxobutyl phosphate and 5-amino-6-(D-ribitylamino)uracil: step 1/2. Catalyzes the formation of 6,7-dimethyl-8-ribityllumazine by condensation of 5-amino-6-(D-ribitylamino)uracil with 3,4-dihydroxy-2-butanone 4-phosphate. This is the penultimate step in the biosynthesis of riboflavin. This is 6,7-dimethyl-8-ribityllumazine synthase from Ralstonia nicotianae (strain ATCC BAA-1114 / GMI1000) (Ralstonia solanacearum).